The following is a 235-amino-acid chain: Phosphatidylserine decarboxylase proenzyme (235 aa).

Serine 204 (schiff-base intermediate with substrate; via pyruvic acid) is an active-site residue. Serine 204 carries the post-translational modification Pyruvic acid (Ser); by autocatalysis.

It belongs to the phosphatidylserine decarboxylase family. PSD-A subfamily. Heterodimer of a large membrane-associated beta subunit and a small pyruvoyl-containing alpha subunit. Requires pyruvate as cofactor. In terms of processing, is synthesized initially as an inactive proenzyme. Formation of the active enzyme involves a self-maturation process in which the active site pyruvoyl group is generated from an internal serine residue via an autocatalytic post-translational modification. Two non-identical subunits are generated from the proenzyme in this reaction, and the pyruvate is formed at the N-terminus of the alpha chain, which is derived from the carboxyl end of the proenzyme. The post-translation cleavage follows an unusual pathway, termed non-hydrolytic serinolysis, in which the side chain hydroxyl group of the serine supplies its oxygen atom to form the C-terminus of the beta chain, while the remainder of the serine residue undergoes an oxidative deamination to produce ammonia and the pyruvoyl prosthetic group on the alpha chain.

Its subcellular location is the cell membrane. The enzyme catalyses a 1,2-diacyl-sn-glycero-3-phospho-L-serine + H(+) = a 1,2-diacyl-sn-glycero-3-phosphoethanolamine + CO2. It participates in phospholipid metabolism; phosphatidylethanolamine biosynthesis; phosphatidylethanolamine from CDP-diacylglycerol: step 2/2. Catalyzes the formation of phosphatidylethanolamine (PtdEtn) from phosphatidylserine (PtdSer). In Mycobacterium sp. (strain JLS), this protein is Phosphatidylserine decarboxylase proenzyme.